The chain runs to 259 residues: Kallikrein 1-related peptidase b22 (259 aa).

The N-terminal stretch at 1-17 (MRFLILFLTLSLGGIDA) is a signal peptide. A propeptide spans 18–24 (APPVQSR) (activation peptide). Positions 25–256 (ILGGFKCEKN…FTSWIKDTMA (232 aa)) constitute a Peptidase S1 domain. Disulfide bonds link C31–C171, C50–C66, C150–C217, C182–C196, and C207–C232. The active-site Charge relay system is H65. N102 carries N-linked (GlcNAc...) asparagine glycosylation. The active-site Charge relay system is the D118. Residue S211 is the Charge relay system of the active site.

This sequence belongs to the peptidase S1 family. Kallikrein subfamily.

It carries out the reaction Preferential cleavage of Arg-|-Xaa bonds in small molecule substrates. Highly selective action to release kallidin (lysyl-bradykinin) from kininogen involves hydrolysis of Met-|-Xaa or Leu-|-Xaa.. Functionally, glandular kallikreins cleave Met-Lys and Arg-Ser bonds in kininogen to release Lys-bradykinin. This chain is Kallikrein 1-related peptidase b22 (Klk1b22), found in Mus musculus (Mouse).